Reading from the N-terminus, the 336-residue chain is Terephthalate 1,2-dioxygenase, reductase component 1 (336 aa).

The 89-residue stretch at 3–91 (HQIHIHDSDI…DIRIQPSSFR (89 aa)) folds into the 2Fe-2S ferredoxin-type domain. Residues C37, C42, C45, and C75 each coordinate [2Fe-2S] cluster. Positions 98 to 197 (RKRFTAKVYS…ELPFGSIALK (100 aa)) constitute an FAD-binding FR-type domain.

In terms of assembly, monomer. Part of a multicomponent enzyme system composed of a reductase (TphA1I or TphA1II) and a two-subunit oxygenase component (TphA2I or TphA2II and TphA3I or TphA3II). FAD serves as cofactor. It depends on [2Fe-2S] cluster as a cofactor.

It catalyses the reaction terephthalate + NADH + O2 + H(+) = (3S,4R)-3,4-dihydroxycyclohexa-1,5-diene-1,4-dicarboxylate + NAD(+). Its function is as follows. Component of the terephthalate 1,2-dioxygenase multicomponent enzyme system which catalyzes the dioxygenation of terephthalate (TER/TPA) to 1,2-dihydroxy-3,5-cyclohexadiene-1,4-dicarboxylic acid (DCD). TphA1 probably reduces TphA2A3. It can also use 2,5-dicarboxypyridine (PDC) and 1,4-napthalenedicarboxylic acid (NDC) as substrates, and preferentially uses NADPH which is the physiological electron donor. In Comamonas sp, this protein is Terephthalate 1,2-dioxygenase, reductase component 1 (tphA1I).